A 303-amino-acid chain; its full sequence is Recombination-associated protein RdgC (303 aa).

This sequence belongs to the RdgC family.

The protein resides in the cytoplasm. Its subcellular location is the nucleoid. In terms of biological role, may be involved in recombination. This Shewanella halifaxensis (strain HAW-EB4) protein is Recombination-associated protein RdgC.